Reading from the N-terminus, the 443-residue chain is Signal recognition particle 54 kDa protein (443 aa).

Residues 107–114, 189–193, and 247–250 each bind GTP; these read GVQGSGKT, DTAGR, and TKLD.

It belongs to the GTP-binding SRP family. SRP54 subfamily. Part of the signal recognition particle protein translocation system, which is composed of SRP and FtsY. Archaeal SRP consists of a 7S RNA molecule of 300 nucleotides and two protein subunits: SRP54 and SRP19.

It is found in the cytoplasm. It carries out the reaction GTP + H2O = GDP + phosphate + H(+). In terms of biological role, involved in targeting and insertion of nascent membrane proteins into the cytoplasmic membrane. Binds to the hydrophobic signal sequence of the ribosome-nascent chain (RNC) as it emerges from the ribosomes. The SRP-RNC complex is then targeted to the cytoplasmic membrane where it interacts with the SRP receptor FtsY. The protein is Signal recognition particle 54 kDa protein of Pyrococcus abyssi (strain GE5 / Orsay).